The sequence spans 136 residues: Small ribosomal subunit protein eS8 (136 aa).

The segment at 1–23 is disordered; it reads MGVYHGNDLKKPTGGKKRPHQKV. Basic residues predominate over residues 13–23; it reads TGGKKRPHQKV.

It belongs to the eukaryotic ribosomal protein eS8 family. Part of the 30S ribosomal subunit.

The protein is Small ribosomal subunit protein eS8 of Hyperthermus butylicus (strain DSM 5456 / JCM 9403 / PLM1-5).